The primary structure comprises 46 residues: uncharacterized protein (46 aa).

Its subcellular location is the plastid. It localises to the chloroplast. This is an uncharacterized protein from Trieres chinensis (Marine centric diatom).